The chain runs to 143 residues: Spanin, inner membrane subunit (143 aa).

The Cytoplasmic portion of the chain corresponds to 1-7 (MLEFLRK). A helical; Signal-anchor for type II membrane protein membrane pass occupies residues 8-24 (LIPWVLAGMLFGLGWHL). Residues 25–143 (GSDSMDAKWK…QDTIRELQRK (119 aa)) lie on the Periplasmic side of the membrane.

This sequence belongs to the T7likevirus i-spanin family. In terms of assembly, interacts (via C-terminus) with the spanin outer lipoprotein subunit (o-spanin) (via C-terminus). Part of the spanin complex which spans the entire periplasmic space. The spanin complex is composed of spanin inner membrane subunit and spanin outer membrane subunit.

It localises to the host cell inner membrane. Functionally, component of the spanin complex that disrupts the host outer membrane and participates in cell lysis during virus exit. The spanin complex conducts the final step in host lysis by disrupting the outer membrane after holin and endolysin action have permeabilized the inner membrane and degraded the host peptidoglycans. Host outer membrane disruption is possibly due to local fusion between the inner and outer membrane performed by the spanin complex. The chain is Spanin, inner membrane subunit from Escherichia coli (Bacteriophage T7).